The primary structure comprises 196 residues: GTP cyclohydrolase 1 (196 aa).

3 residues coordinate Zn(2+): cysteine 84, histidine 87, and cysteine 157.

Belongs to the GTP cyclohydrolase I family. In terms of assembly, toroid-shaped homodecamer, composed of two pentamers of five dimers.

It carries out the reaction GTP + H2O = 7,8-dihydroneopterin 3'-triphosphate + formate + H(+). Its pathway is cofactor biosynthesis; 7,8-dihydroneopterin triphosphate biosynthesis; 7,8-dihydroneopterin triphosphate from GTP: step 1/1. The sequence is that of GTP cyclohydrolase 1 from Corynebacterium glutamicum (strain R).